Reading from the N-terminus, the 373-residue chain is Dual-specificity RNA methyltransferase RlmN (373 aa).

Catalysis depends on Glu94, which acts as the Proton acceptor. Residues 100-339 (EEDRATLCVS…VIVRKTRGDD (240 aa)) form the Radical SAM core domain. An intrachain disulfide couples Cys107 to Cys344. Cys114, Cys118, and Cys121 together coordinate [4Fe-4S] cluster. S-adenosyl-L-methionine-binding positions include 168–169 (GE), Ser200, 222–224 (SIH), and Asn301. Cys344 (S-methylcysteine intermediate) is an active-site residue.

Belongs to the radical SAM superfamily. RlmN family. The cofactor is [4Fe-4S] cluster.

It localises to the cytoplasm. The enzyme catalyses adenosine(2503) in 23S rRNA + 2 reduced [2Fe-2S]-[ferredoxin] + 2 S-adenosyl-L-methionine = 2-methyladenosine(2503) in 23S rRNA + 5'-deoxyadenosine + L-methionine + 2 oxidized [2Fe-2S]-[ferredoxin] + S-adenosyl-L-homocysteine. The catalysed reaction is adenosine(37) in tRNA + 2 reduced [2Fe-2S]-[ferredoxin] + 2 S-adenosyl-L-methionine = 2-methyladenosine(37) in tRNA + 5'-deoxyadenosine + L-methionine + 2 oxidized [2Fe-2S]-[ferredoxin] + S-adenosyl-L-homocysteine. Functionally, specifically methylates position 2 of adenine 2503 in 23S rRNA and position 2 of adenine 37 in tRNAs. m2A2503 modification seems to play a crucial role in the proofreading step occurring at the peptidyl transferase center and thus would serve to optimize ribosomal fidelity. The protein is Dual-specificity RNA methyltransferase RlmN of Shewanella loihica (strain ATCC BAA-1088 / PV-4).